The primary structure comprises 409 residues: tRNA(Met) cytidine acetate ligase (409 aa).

ATP contacts are provided by residues 7-20, Gly-102, Asn-169, and Arg-194; that span reads VVEYNPMHNGHLYH.

This sequence belongs to the TmcAL family.

The protein resides in the cytoplasm. It catalyses the reaction cytidine(34) in elongator tRNA(Met) + acetate + ATP = N(4)-acetylcytidine(34) in elongator tRNA(Met) + AMP + diphosphate. Functionally, catalyzes the formation of N(4)-acetylcytidine (ac(4)C) at the wobble position of elongator tRNA(Met), using acetate and ATP as substrates. First activates an acetate ion to form acetyladenylate (Ac-AMP) and then transfers the acetyl group to tRNA to form ac(4)C34. This chain is tRNA(Met) cytidine acetate ligase, found in Clostridium botulinum (strain Kyoto / Type A2).